Consider the following 128-residue polypeptide: MLTYAPLNFIAIGIGATLGAWLRWVLGLRLNGAGWPWGTLTANLVGGYLIGVMVALIASHPEWPAWIRLAAVTGFLGGLTTFSTFSAETVDMLERGVYATAAAYAGASLAGSLAMTGLGLATVRLLLR.

4 helical membrane-spanning segments follow: residues 7–29, 36–57, 65–94, and 98–126; these read LNFI…LGLR, PWGT…VALI, AWIR…DMLE, and YATA…VRLL. Asparagine 43 provides a ligand contact to fluoride. 2 residues coordinate Na(+): glycine 77 and threonine 80. Tyrosine 104, serine 108, and serine 112 together coordinate fluoride.

It belongs to the fluoride channel Fluc/FEX (TC 1.A.43) family. As to quaternary structure, homodimer.

The protein localises to the cell inner membrane. The enzyme catalyses fluoride(in) = fluoride(out). Its activity is regulated as follows. Na(+) is not transported, but it plays an essential structural role and its presence is essential for fluoride channel function. The Na(+)-binding site is specific for Na(+) over most other cations including K(+) and Mg(2+). Fluoride efflux is inhibited by Li(2+). Fluoride-specific ion channel. Important for reducing fluoride concentration in the cell, thus reducing its toxicity. Is highly specific for fluoride ions and cannot transport chloride ions. The protein is Fluoride-specific ion channel FluC of Bordetella pertussis (strain Tohama I / ATCC BAA-589 / NCTC 13251).